The primary structure comprises 607 residues: MKWVTFVSLLFLFSSAYFRGVLRRDTHKSEIAHRFNDLGEKHFKGLVLVAFSQYLQQCPFEDHVKLVNEVTEFAKKCAADESAENCDKSLHTLFGDKLCTVATLRATYGELADCCEKQEPERNECFLTHKDDHPNLPKLKPEPDAQCAAFQEDPDKFLGKYLYEVARRHPYFYGPELLFHAEEYKADFTECCPADDKAGCLIPKLDALKERILLSSAKERLKCSSFQKFGERAFKAWSVARLSQKFPKADFAEVSKIVTDLTKVHKECCHGDLLECADDRADLTKYICEHQDSISGKLKACCDKPLLQKSHCIAEVKEDDLPSDLPALAADFAEDKEICKHYKDAKDVFLGTFLYEYSRRHPDYSVSLLLRIAKTYEATLEKCCAEADPPACYATVFDQFTPLVEEPKSLVKKNCDLFEEVGEYDFQNALIVRYTKKAPQVSTPTLVEIGRTLGKVGSRCCKLPESERLPCSENHLALALNRLCVLHEKTPVSEKITKCCTDSLAERRPCFSALELDEGYIPKEFKAETFTFHADICTLPEDEKQIKKQSALAELVKHKPKATKEQLKTVLGNFSAFVAKCCGAEDKEACFAEEGPKLVASSQLALA.

Positions Met1–Phe18 are cleaved as a signal peptide. Positions Arg19–Arg24 are excised as a propeptide. Albumin domains lie at Arg19–Lys209, Glu210–Pro402, and Leu403–Ala600. His27 serves as a coordination point for Cu cation. The residue at position 29 (Ser29) is a Phosphoserine. Ca(2+) is bound by residues Glu30 and Asp37. The cysteines at positions 77 and 86 are disulfide-linked. 2 positions are modified to phosphoserine: Ser82 and Ser89. Residue His91 coordinates Zn(2+). Intrachain disulfides connect Cys99–Cys115, Cys114–Cys125, Cys147–Cys192, Cys191–Cys200, Cys223–Cys269, and Cys268–Cys276. Residue Thr107 is modified to Phosphothreonine. Lys228 is modified (N6-succinyllysine). Position 267 (Glu267) interacts with Ca(2+). 2 residues coordinate Zn(2+): His270 and Asp272. The Ca(2+) site is built by Asp272, Glu275, Asp278, and Asp282. 8 disulfide bridges follow: Cys288/Cys302, Cys301/Cys312, Cys339/Cys384, Cys383/Cys392, Cys415/Cys461, Cys460/Cys471, Cys484/Cys500, and Cys499/Cys510. Ser442 carries the phosphoserine modification. Phosphothreonine is present on residues Thr443 and Thr445. Residue Ser512 is modified to Phosphoserine. 2 cysteine pairs are disulfide-bonded: Cys537/Cys582 and Cys581/Cys590. An N6-methyllysine modification is found at Lys557. Thr569 is subject to Phosphothreonine. Lys587 carries the post-translational modification N6-succinyllysine.

This sequence belongs to the ALB/AFP/VDB family. In terms of assembly, interacts with FCGRT; this interaction regulates ALB homeostasis. Interacts with TASOR. In plasma, occurs in a covalently-linked complex with chromophore-bound alpha-1-microglobulin; this interaction does not prevent fatty acid binding to ALB. Post-translationally, phosphorylated by FAM20C in the extracellular medium. In terms of tissue distribution, plasma.

It is found in the secreted. In terms of biological role, binds water, Ca(2+), Na(+), K(+), fatty acids, hormones, bilirubin and drugs. Its main function is the regulation of the colloidal osmotic pressure of blood. Major zinc transporter in plasma, typically binds about 80% of all plasma zinc. Major calcium and magnesium transporter in plasma, binds approximately 45% of circulating calcium and magnesium in plasma. Potentially has more than two calcium-binding sites and might additionally bind calcium in a non-specific manner. The shared binding site between zinc and calcium at residue Asp-272 suggests a crosstalk between zinc and calcium transport in the blood. The rank order of affinity is zinc &gt; calcium &gt; magnesium. Binds to the bacterial siderophore enterobactin and inhibits enterobactin-mediated iron uptake of E.coli from ferric transferrin, and may thereby limit the utilization of iron and growth of enteric bacteria such as E.coli. Does not prevent iron uptake by the bacterial siderophore aerobactin. This chain is Albumin (ALB), found in Equus asinus (Donkey).